The following is a 397-amino-acid chain: Subtilisin-like serine protease Pen c 1 (397 aa).

A signal peptide spans 1–19 (MGFLKVLATSLATLAVVDA). A propeptide spans 20–115 (GTLLTASNTD…IEPDMIVNAT (96 aa)) (removed in mature form). An Inhibitor I9 domain is found at 35–113 (SYIVVMNDDV…KYIEPDMIVN (79 aa)). The Peptidase S8 domain maps to 125 to 397 (SWGLARISSK…SKLLYNGINV (273 aa)). Catalysis depends on charge relay system residues aspartate 157, histidine 188, and serine 343.

This sequence belongs to the peptidase S8 family.

It localises to the secreted. Its activity is regulated as follows. Inhibited by 0.1 mM diisopropyl fluorophosphate (DFP), phenylmethanesulfonyl fluoride (PMSF), chymostatin and elastatinal. Not inhibited by N-alpha-p-tosyl-L-lysine chloromethylketone (TLCK), N-tosyl-L-phenylalanyl chloromethyl ketone (TPCK) or N-carbobenzoxy-L-phenylalanine chloromethylketone (ZPCK). Functionally, serine protease. Hydrolyzes azocasein. Cleaves peptide bonds of the oxidized insulin B chain preferably at 15-Leu-|-Tyr-16, but also at 4-Gln-|-His-5 and 24-Phe-|-Phe-25, and to a lesser extent at 5-His-|-Leu-6 and 25-Phe-|-Tyr-26. Hydrolyzes amide bonds between amino acids and 7-amino-4-methylcoumarin (AMC) in vitro. This is Subtilisin-like serine protease Pen c 1 from Penicillium citrinum.